Here is a 253-residue protein sequence, read N- to C-terminus: Geranylgeranylglyceryl phosphate synthase (253 aa).

Residues Asp28 and Ser53 each contribute to the Mg(2+) site. Sn-glycerol 1-phosphate contacts are provided by residues 172–178, 203–204, and 225–226; these read YLEAGSG, GG, and GN.

The protein belongs to the GGGP/HepGP synthase family. Group II subfamily. It depends on Mg(2+) as a cofactor.

The protein localises to the cytoplasm. It catalyses the reaction sn-glycerol 1-phosphate + (2E,6E,10E)-geranylgeranyl diphosphate = sn-3-O-(geranylgeranyl)glycerol 1-phosphate + diphosphate. The protein operates within membrane lipid metabolism; glycerophospholipid metabolism. In terms of biological role, prenyltransferase that catalyzes the transfer of the geranylgeranyl moiety of geranylgeranyl diphosphate (GGPP) to the C3 hydroxyl of sn-glycerol-1-phosphate (G1P). This reaction is the first ether-bond-formation step in the biosynthesis of archaeal membrane lipids. The polypeptide is Geranylgeranylglyceryl phosphate synthase (Methanocaldococcus jannaschii (strain ATCC 43067 / DSM 2661 / JAL-1 / JCM 10045 / NBRC 100440) (Methanococcus jannaschii)).